Consider the following 337-residue polypeptide: Glycerol-3-phosphate dehydrogenase [NAD(P)+] (337 aa).

Residues S12, W13, and K110 each contribute to the NADPH site. Residues K110, G141, and S143 each coordinate sn-glycerol 3-phosphate. A145 is an NADPH binding site. Residues K196, D249, S259, R260, and N261 each contribute to the sn-glycerol 3-phosphate site. K196 functions as the Proton acceptor in the catalytic mechanism. R260 is a binding site for NADPH. Residues V284 and E286 each coordinate NADPH.

The protein belongs to the NAD-dependent glycerol-3-phosphate dehydrogenase family.

The protein resides in the cytoplasm. The catalysed reaction is sn-glycerol 3-phosphate + NAD(+) = dihydroxyacetone phosphate + NADH + H(+). It catalyses the reaction sn-glycerol 3-phosphate + NADP(+) = dihydroxyacetone phosphate + NADPH + H(+). The protein operates within membrane lipid metabolism; glycerophospholipid metabolism. Its function is as follows. Catalyzes the reduction of the glycolytic intermediate dihydroxyacetone phosphate (DHAP) to sn-glycerol 3-phosphate (G3P), the key precursor for phospholipid synthesis. The protein is Glycerol-3-phosphate dehydrogenase [NAD(P)+] of Levilactobacillus brevis (strain ATCC 367 / BCRC 12310 / CIP 105137 / JCM 1170 / LMG 11437 / NCIMB 947 / NCTC 947) (Lactobacillus brevis).